Reading from the N-terminus, the 359-residue chain is MKQIQVDLANRSYPIHIGPNLFEDQELFAPVVSGKKVLVVSNETIAPLYLDKISATLSARAAQVASVILPDGEQYKTLDYLNEIFDALLEGNFARDCVLVALGGGVIGDMTGFAAACYQRGVDFIQIPTTLLSQVDSSVGGKTAVNHPLGKNMIGAFYQPKLVVIDINCLKTLPAREFAAGMAEVIKYGIIRDSELFTWLEQNVSALKALDQDAIIHVIARCCEIKAEVVSEDETEQGVRALLNLGHTFGHAIEAEMGYGNWLHGEAVAAGMVLAAQTSVTLGLIDKSILCRIAALIQAFDLPVQAPESMDFNSFIKHMRRDKKVLGGQLRLVLPLGIGAAEVSSQASDAELAEVIRRP.

NAD(+)-binding positions include 71-76, 105-109, 129-130, K142, K151, and 169-172; these read DGEQYK, GVIGD, TT, and CLKT. The Zn(2+) site is built by E184, H247, and H264.

Belongs to the sugar phosphate cyclases superfamily. Dehydroquinate synthase family. Requires Co(2+) as cofactor. The cofactor is Zn(2+). NAD(+) is required as a cofactor.

It is found in the cytoplasm. It carries out the reaction 7-phospho-2-dehydro-3-deoxy-D-arabino-heptonate = 3-dehydroquinate + phosphate. It functions in the pathway metabolic intermediate biosynthesis; chorismate biosynthesis; chorismate from D-erythrose 4-phosphate and phosphoenolpyruvate: step 2/7. Functionally, catalyzes the conversion of 3-deoxy-D-arabino-heptulosonate 7-phosphate (DAHP) to dehydroquinate (DHQ). This is 3-dehydroquinate synthase from Shewanella amazonensis (strain ATCC BAA-1098 / SB2B).